The following is a 230-amino-acid chain: MAGKRLLEQRARVERERLYSPREALELLKELDGARFDETVEAHVHLNVDPRRADQMVRGTLMLPNGTGKTRRVAVFAVGEKAREAEEAGADIVGSEELAARIQNEGFMDFDVAVATPDQMSIVGRLGPILGPRGLMPNPKSGTVTMDVGRAVEEIKRGKVEYRVDRYGIIHTVLGKKSFDVDSLLENYFALREELVRARPAAVKGRYIKSVAFTTTMGPSVKVDPSVERE.

The protein belongs to the universal ribosomal protein uL1 family. In terms of assembly, part of the 50S ribosomal subunit.

Its function is as follows. Binds directly to 23S rRNA. The L1 stalk is quite mobile in the ribosome, and is involved in E site tRNA release. Functionally, protein L1 is also a translational repressor protein, it controls the translation of the L11 operon by binding to its mRNA. The polypeptide is Large ribosomal subunit protein uL1 (Rubrobacter xylanophilus (strain DSM 9941 / JCM 11954 / NBRC 16129 / PRD-1)).